Reading from the N-terminus, the 425-residue chain is MREPDFLNHFLKKGYFKKHAKAVLALSGGLDSMFLFKVLSTYQKELEIELILAHVNHKQRIESDWEEKELRKLAAEAELPIYISNFSGEFSEARARNFRYDFFQEVMKKTGATALVTAHHADDQVETIFMRLIRGTRLRYLSGIKEKQVVGEIEIIRPFLHFQKKDFPSIFHFEDTSNQENHYFRNRIRNSYLPELEKENPRFRDAILGIGNEILDYDLAIAELSNNINVEDLQQLFSYSESTQRVLLQTYLNRFPDLNLTKAQFAEVQQILKFKSQYRHPIKNGYELIKEYQQFQICKISPQADEKEDELVLHYQNQVAYQGYLFSFGLPLEGELIQQIPVSRETSIHIRHRKTGDVLIKNGHRKKLRRLFIDLKIPMEKRNSALIIEQFGEIVSILGIATNNLSKKTKNDIMNTVLYIEKIDR.

27 to 32 is an ATP binding site; it reads SGGLDS.

The protein belongs to the tRNA(Ile)-lysidine synthase family.

It is found in the cytoplasm. The catalysed reaction is cytidine(34) in tRNA(Ile2) + L-lysine + ATP = lysidine(34) in tRNA(Ile2) + AMP + diphosphate + H(+). Ligates lysine onto the cytidine present at position 34 of the AUA codon-specific tRNA(Ile) that contains the anticodon CAU, in an ATP-dependent manner. Cytidine is converted to lysidine, thus changing the amino acid specificity of the tRNA from methionine to isoleucine. The sequence is that of tRNA(Ile)-lysidine synthase from Streptococcus pneumoniae serotype 2 (strain D39 / NCTC 7466).